Consider the following 247-residue polypeptide: 2,3-bisphosphoglycerate-dependent phosphoglycerate mutase (247 aa).

Residues 8–15 (RHGESTWN), 21–22 (TG), Arg-60, 87–90 (ERHY), Lys-98, 114–115 (RR), and 183–184 (GN) each bind substrate. The active-site Tele-phosphohistidine intermediate is His-9. Glu-87 acts as the Proton donor/acceptor in catalysis.

It belongs to the phosphoglycerate mutase family. BPG-dependent PGAM subfamily. As to quaternary structure, homodimer.

The catalysed reaction is (2R)-2-phosphoglycerate = (2R)-3-phosphoglycerate. It functions in the pathway carbohydrate degradation; glycolysis; pyruvate from D-glyceraldehyde 3-phosphate: step 3/5. Functionally, catalyzes the interconversion of 2-phosphoglycerate and 3-phosphoglycerate. The protein is 2,3-bisphosphoglycerate-dependent phosphoglycerate mutase of Albidiferax ferrireducens (strain ATCC BAA-621 / DSM 15236 / T118) (Rhodoferax ferrireducens).